A 610-amino-acid polypeptide reads, in one-letter code: Atypical kinase COQ8, mitochondrial (610 aa).

Positions G98 to K111 are enriched in basic and acidic residues. The tract at residues G98–S144 is disordered.

Belongs to the protein kinase superfamily. ADCK protein kinase family.

It is found in the mitochondrion. The protein operates within cofactor biosynthesis; ubiquinone biosynthesis. In terms of biological role, atypical kinase involved in the biosynthesis of coenzyme Q, also named ubiquinone, an essential lipid-soluble electron transporter for aerobic cellular respiration. Its substrate specificity is still unclear: may act as a protein kinase that mediates phosphorylation of coq3. According to other reports, acts as a small molecule kinase, possibly a lipid kinase that phosphorylates a prenyl lipid in the ubiquinone biosynthesis pathway, as suggested by its ability to bind coenzyme Q lipid intermediates. The protein is Atypical kinase COQ8, mitochondrial of Schizosaccharomyces pombe (strain 972 / ATCC 24843) (Fission yeast).